Reading from the N-terminus, the 25-residue chain is Css54 (25 aa).

Expressed by the venom gland.

The protein resides in the secreted. It is found in the target cell membrane. Functionally, amphipathic peptide that shows antibacterial activity against E.coli (MIC=12.5 ug/ml) and S.aureus (MIC=12.5 ug/ml). Has hemolytic activity against human erythrocytes (25 uM provokes 83% of hemolysis). May act by disrupting the integrity of the bacterial cell membrane. Increases efficacy of antibiotics (ethambutol, pyrazinamide, isoniazid, rifampicin) when tested against S.aureus, probably by facilitating their incorporation into the bacteria. In Centruroides suffusus (Durango bark scorpion), this protein is Css54.